The chain runs to 172 residues: 16S rRNA aminocarboxypropyltransferase (172 aa).

Residues threonine 21, leucine 71, leucine 93, and threonine 112 each contribute to the S-adenosyl-L-methionine site.

The protein belongs to the TDD superfamily. TSR3 family.

It localises to the cytoplasm. The enzyme catalyses an N(1)-methylpseudouridine in rRNA + S-adenosyl-L-methionine = N(1)-methyl-N(3)-[(3S)-3-amino-3-carboxypropyl]pseudouridine in rRNA + S-methyl-5'-thioadenosine + H(+). Its function is as follows. Aminocarboxypropyltransferase that catalyzes the aminocarboxypropyl transfer on pseudouridine at position 914 in 16S rRNA. It constitutes the last step in biosynthesis of the hypermodified N1-methyl-N3-(3-amino-3-carboxypropyl) pseudouridine (m1acp3-Psi). In Methanocaldococcus jannaschii (strain ATCC 43067 / DSM 2661 / JAL-1 / JCM 10045 / NBRC 100440) (Methanococcus jannaschii), this protein is 16S rRNA aminocarboxypropyltransferase.